Consider the following 238-residue polypeptide: Large ribosomal subunit protein uL3 (238 aa).

Belongs to the universal ribosomal protein uL3 family. As to quaternary structure, part of the 50S ribosomal subunit. Forms a cluster with proteins L14 and L19.

In terms of biological role, one of the primary rRNA binding proteins, it binds directly near the 3'-end of the 23S rRNA, where it nucleates assembly of the 50S subunit. The protein is Large ribosomal subunit protein uL3 of Mesoplasma florum (strain ATCC 33453 / NBRC 100688 / NCTC 11704 / L1) (Acholeplasma florum).